Consider the following 315-residue polypeptide: tRNA dimethylallyltransferase (315 aa).

G11–S18 serves as a coordination point for ATP. T13–S18 is a binding site for substrate. Interaction with substrate tRNA stretches follow at residues D36 to Q39 and Q160 to R164.

The protein belongs to the IPP transferase family. As to quaternary structure, monomer. The cofactor is Mg(2+).

It catalyses the reaction adenosine(37) in tRNA + dimethylallyl diphosphate = N(6)-dimethylallyladenosine(37) in tRNA + diphosphate. Its function is as follows. Catalyzes the transfer of a dimethylallyl group onto the adenine at position 37 in tRNAs that read codons beginning with uridine, leading to the formation of N6-(dimethylallyl)adenosine (i(6)A). This Rickettsia bellii (strain OSU 85-389) protein is tRNA dimethylallyltransferase.